The chain runs to 567 residues: Allo-aromadendrene synthase TPS4FN (567 aa).

(2E,6E)-farnesyl diphosphate-binding residues include Arg-282, Asp-319, Asp-323, Arg-462, and Asp-465. Mg(2+)-binding residues include Asp-319 and Asp-323. A DDXXD motif motif is present at residues Asp-319–Asp-323. Residues Asp-465 and Glu-473 each contribute to the Mg(2+) site.

Belongs to the terpene synthase family. Tpsb subfamily. Mg(2+) is required as a cofactor. The cofactor is Mn(2+).

It carries out the reaction (2E,6E)-farnesyl diphosphate = alpha-humulene + diphosphate. The catalysed reaction is (2E,6E)-farnesyl diphosphate = (+)-valencene + diphosphate. The enzyme catalyses (2E)-geranyl diphosphate = beta-myrcene + diphosphate. It catalyses the reaction (2E,6E)-farnesyl diphosphate = allo-aromadendrene + diphosphate. It carries out the reaction (2E,6E)-farnesyl diphosphate + H2O = palustrol + diphosphate. It functions in the pathway secondary metabolite biosynthesis; terpenoid biosynthesis. Functionally, involved in sesquiterpene olefins biosynthesis, constituants of cannabinoids and terpenoids-rich resins. Catalyzes mainly the conversion of (2E)-farnesyl diphosphate to allo-aromadendrene, and also produces minor products such as alpha-humulene, valencene and palustrol. Can also use (2E)-geranyl diphosphate as substrate with low efficiency, producing minor amounts of myrcene. This is Allo-aromadendrene synthase TPS4FN from Cannabis sativa (Hemp).